The following is a 128-amino-acid chain: Small ribosomal subunit protein uS10 (128 aa).

This sequence belongs to the universal ribosomal protein uS10 family.

The protein is Small ribosomal subunit protein uS10 (RPS20) of Oryza sativa subsp. japonica (Rice).